Consider the following 254-residue polypeptide: 3-oxo-5-alpha-steroid 4-dehydrogenase 2 (254 aa).

A run of 4 helical transmembrane segments spans residues 8 to 28 (SPVL…LYFA), 72 to 92 (PRSL…AHYF), 146 to 166 (FSLG…SDYI), and 206 to 226 (LATW…FLGL).

This sequence belongs to the steroid 5-alpha reductase family.

It is found in the microsome membrane. Its subcellular location is the endoplasmic reticulum membrane. It carries out the reaction a 3-oxo-5alpha-steroid + NADP(+) = a 3-oxo-Delta(4)-steroid + NADPH + H(+). The enzyme catalyses 17beta-hydroxy-5alpha-androstan-3-one + NADP(+) = testosterone + NADPH + H(+). The catalysed reaction is 5alpha-pregnane-3,20-dione + NADP(+) = progesterone + NADPH + H(+). Its function is as follows. Converts testosterone (T) into 5-alpha-dihydrotestosterone (DHT) and progesterone or corticosterone into their corresponding 5-alpha-3-oxosteroids. It plays a central role in sexual differentiation and androgen physiology. This is 3-oxo-5-alpha-steroid 4-dehydrogenase 2 (SRD5A2) from Sus scrofa (Pig).